The following is a 196-amino-acid chain: Molybdenum cofactor guanylyltransferase (196 aa).

Residues 10–12 (LAG), Lys23, Asn51, Asp69, and Asp99 contribute to the GTP site. Asp99 is a binding site for Mg(2+).

Belongs to the MobA family. In terms of assembly, monomer. Requires Mg(2+) as cofactor.

It localises to the cytoplasm. It catalyses the reaction Mo-molybdopterin + GTP + H(+) = Mo-molybdopterin guanine dinucleotide + diphosphate. Its function is as follows. Transfers a GMP moiety from GTP to Mo-molybdopterin (Mo-MPT) cofactor (Moco or molybdenum cofactor) to form Mo-molybdopterin guanine dinucleotide (Mo-MGD) cofactor. The polypeptide is Molybdenum cofactor guanylyltransferase (Shewanella baltica (strain OS155 / ATCC BAA-1091)).